The primary structure comprises 465 residues: Ribulose bisphosphate carboxylase large chain (465 aa).

Lysine 4 bears the N6,N6,N6-trimethyllysine mark. Positions 113 and 163 each coordinate substrate. Lysine 165 acts as the Proton acceptor in catalysis. Lysine 167 lines the substrate pocket. Residues lysine 191, aspartate 193, and glutamate 194 each coordinate Mg(2+). Position 191 is an N6-carboxylysine (lysine 191). The active-site Proton acceptor is the histidine 284. Substrate-binding residues include arginine 285, histidine 317, and serine 369.

Belongs to the RuBisCO large chain family. Type I subfamily. As to quaternary structure, heterohexadecamer of 8 large chains and 8 small chains; disulfide-linked. The disulfide link is formed within the large subunit homodimers. Mg(2+) is required as a cofactor. Post-translationally, the disulfide bond which can form in the large chain dimeric partners within the hexadecamer appears to be associated with oxidative stress and protein turnover.

The protein resides in the plastid. It is found in the chloroplast. The enzyme catalyses 2 (2R)-3-phosphoglycerate + 2 H(+) = D-ribulose 1,5-bisphosphate + CO2 + H2O. It catalyses the reaction D-ribulose 1,5-bisphosphate + O2 = 2-phosphoglycolate + (2R)-3-phosphoglycerate + 2 H(+). RuBisCO catalyzes two reactions: the carboxylation of D-ribulose 1,5-bisphosphate, the primary event in carbon dioxide fixation, as well as the oxidative fragmentation of the pentose substrate in the photorespiration process. Both reactions occur simultaneously and in competition at the same active site. The sequence is that of Ribulose bisphosphate carboxylase large chain from Platytheca verticillata.